The sequence spans 436 residues: Platelet-activating factor acetylhydrolase (436 aa).

Positions 1 to 21 (MAPPKLHTLFCLSGFLALVHP) are cleaved as a signal peptide. N-linked (GlcNAc...) asparagine glycans are attached at residues Asn76 and Asn200. Residue Ser271 is the Nucleophile of the active site. Residue Asp294 is the Charge relay system of the active site. Asn324 is a glycosylation site (N-linked (GlcNAc...) asparagine). His349 (charge relay system) is an active-site residue.

This sequence belongs to the AB hydrolase superfamily. Lipase family. In terms of processing, N-glycosylated. As to expression, plasma.

It localises to the secreted. It is found in the extracellular space. It carries out the reaction a 1-O-alkyl-2-acetyl-sn-glycero-3-phosphocholine + H2O = a 1-O-alkyl-sn-glycero-3-phosphocholine + acetate + H(+). The enzyme catalyses 1-O-decyl-2-acetyl-sn-glycero-3-phosphocholine + H2O = 1-O-decyl-sn-glycero-3-phosphocholine + acetate + H(+). The catalysed reaction is 1-O-dodecyl-2-acetyl-sn-glycero-3-phosphocholine + H2O = 1-O-dodecyl-sn-glycero-3-phosphocholine + acetate + H(+). It catalyses the reaction 1-O-tetradecyl-2-acetyl-sn-glycero-3-phosphocholine + H2O = 1-O-tetradecyl-sn-glycero-3-phosphocholine + acetate + H(+). It carries out the reaction 1-O-hexadecyl-2-acetyl-sn-glycero-3-phosphocholine + H2O = 1-O-hexadecyl-sn-glycero-3-phosphocholine + acetate + H(+). The enzyme catalyses 1-O-octadecyl-2-acetyl-sn-glycero-3-phosphocholine + H2O = 1-O-octadecyl-sn-glycero-3-phosphocholine + acetate + H(+). The catalysed reaction is 1-hexadecanoyl-2-acetyl-sn-glycero-3-phosphocholine + H2O = 1-hexadecanoyl-sn-glycero-3-phosphocholine + acetate + H(+). It catalyses the reaction 1-hexadecanoyl-2-propionyl-sn-glycero-3-phosphocholine + H2O = propanoate + 1-hexadecanoyl-sn-glycero-3-phosphocholine + H(+). It carries out the reaction 1-hexadecanoyl-2-butanoyl-sn-glycero-3-phosphocholine + H2O = butanoate + 1-hexadecanoyl-sn-glycero-3-phosphocholine + H(+). The enzyme catalyses 1-hexadecanoyl-2-pentanoyl-sn-glycero-3-phosphocholine + H2O = pentanoate + 1-hexadecanoyl-sn-glycero-3-phosphocholine + H(+). The catalysed reaction is 1-hexadecanoyl-2-glutaroyl-sn-glycero-3-phosphocholine + H2O = glutarate + 1-hexadecanoyl-sn-glycero-3-phosphocholine + H(+). It catalyses the reaction 1-hexadecanoyl-2-(5-oxopentanoyl)-sn-glycero-3-phosphocholine + H2O = 5-oxopentanoate + 1-hexadecanoyl-sn-glycero-3-phosphocholine + H(+). It carries out the reaction 1-hexadecanoyl-2-(9-oxononanoyl)-sn-glycero-3-phosphocholine + H2O = 9-oxononanoate + 1-hexadecanoyl-sn-glycero-3-phosphocholine + H(+). The enzyme catalyses 1-hexadecanoyl-2-[9-hydroperoxy-(10E-octadecenoyl)]-sn-glycero-3-phosphocholine + H2O = 9-hydroperoxy-10E-octadecenoate + 1-hexadecanoyl-sn-glycero-3-phosphocholine + H(+). The catalysed reaction is 1-hexadecanoyl-2-(10-hydroperoxy-8E-octadecenoyl)-sn-glycero-3-phosphocholine + H2O = 10-hydroperoxy-(8E)-octadecenoate + 1-hexadecanoyl-sn-glycero-3-phosphocholine + H(+). Lipoprotein-associated calcium-independent phospholipase A2 involved in phospholipid catabolism during inflammatory and oxidative stress response. At the lipid-aqueous interface, hydrolyzes the ester bond of fatty acyl group attached at sn-2 position of phospholipids (phospholipase A2 activity). Specifically targets phospholipids with a short-chain fatty acyl group at sn-2 position. Can hydrolyze phospholipids with long fatty acyl chains, only if they carry oxidized functional groups. Hydrolyzes and inactivates platelet-activating factor (PAF, 1-O-alkyl-2-acetyl-sn-glycero-3-phosphocholine), a potent pro-inflammatory signaling lipid that acts through PTAFR on various innate immune cells. Hydrolyzes oxidatively truncated phospholipids carrying an aldehyde group at omega position, preventing their accumulation in lipoprotein particles and uncontrolled pro-inflammatory effects. As part of high-density lipoprotein (HDL) particles, can hydrolyze phospholipids having long-chain fatty acyl hydroperoxides at sn-2 position and protect against potential accumulation of these oxylipins in the vascular wall. Catalyzes the release from membrane phospholipids of F2-isoprostanes, lipid biomarkers of cellular oxidative damage. In Cavia porcellus (Guinea pig), this protein is Platelet-activating factor acetylhydrolase (PLA2G7).